Reading from the N-terminus, the 106-residue chain is Nucleoid-associated protein PD_1058 (106 aa).

This sequence belongs to the YbaB/EbfC family. Homodimer.

The protein resides in the cytoplasm. Its subcellular location is the nucleoid. Functionally, binds to DNA and alters its conformation. May be involved in regulation of gene expression, nucleoid organization and DNA protection. This chain is Nucleoid-associated protein PD_1058, found in Xylella fastidiosa (strain Temecula1 / ATCC 700964).